A 441-amino-acid polypeptide reads, in one-letter code: MTSAIWHERRLGEEKLRRNDHRSPYQRDRARILHSAAFRRLQAKTQVLGVGMNDFYRTRLTHSLEVSQIGTGICAQLKQKYPDLHHLLDSMSLIESLCLAHDIGHPPFGHGGEVALNYMMRSDGGFEGNGQTFRILTALEPYTQHFGMNLTRRTLLGILKYPASHNELYQSQPRPEVDSYRQLKPSQWRPVKGIFFEDKPVLDWVLEPLSTQDRERFVSAEPGERDQHRRTRYKSLDCSIMELADDTAYAIHDLEDAIVMGIVTQAMWQQDVSSLLAGSDDEWIAKEFATIGDKLFALENHLRKDAIGTLVNGFVTAILIDENPNFIEPLLRYNARLEPPFAEALHVLKQFVYKRVIRKPEIQMLEYKGQQIVMELFEAFASDPERLLPLNTQERWQQMAQQEGNCNRVIADYISGMTDEFAARLHQHLFSAKAGSLIDLQ.

Residues 59–250 (RLTHSLEVSQ…MELADDTAYA (192 aa)) enclose the HD domain.

This sequence belongs to the dGTPase family. Type 2 subfamily.

The sequence is that of Deoxyguanosinetriphosphate triphosphohydrolase-like protein from Shewanella loihica (strain ATCC BAA-1088 / PV-4).